The following is a 325-amino-acid chain: Protein TMED8 (325 aa).

Positions Met-1–Thr-78 are disordered. A GOLD domain is found at Pro-159–Tyr-323. Residue Lys-169 is modified to N6-acetyllysine. The disordered stretch occupies residues Thr-232 to Ser-267. The segment covering Ser-238 to Glu-254 has biased composition (acidic residues).

In Homo sapiens (Human), this protein is Protein TMED8 (TMED8).